An 892-amino-acid chain; its full sequence is NACHT, LRR and PYD domains-containing protein 6 (892 aa).

One can recognise a Pyrin domain in the interval 1-103 (MDQPEAPCSS…AAQLQERRLQ (103 aa)). A disordered region spans residues 158 to 181 (APEEAMGPAEEPEPGRARRSDTHT). Residues 170–181 (EPGRARRSDTHT) show a composition bias toward basic and acidic residues. An NACHT domain is found at 196-513 (LTVVLQGPAG…EFLAALSYLL (318 aa)). 202–209 (GPAGIGKT) serves as a coordination point for ATP. Positions 352–356 (KDKKK) are disordered. The LRR 1 repeat unit spans residues 462–487 (EKELEQLELRGSKVQTLFLSKKELPG). The disordered stretch occupies residues 590-614 (APEVTEGAKGLEDTEEPEEEEEGEE). The segment covering 602 to 614 (DTEEPEEEEEGEE) has biased composition (acidic residues). 4 LRR repeats span residues 727 to 747 (LCHL…VCRD), 755 to 778 (APAL…MLSE), 811 to 834 (SPAL…YLCA), and 845 to 868 (TLSL…KRAK).

Belongs to the NLRP family. In terms of assembly, homomultimer; forms the NLRP6 inflammasome polymeric complex, a filament composed of homopolymers in response to pathogens and other damage-associated signals. The core of NLRP6 inflammasomes consists of a signal sensor component (NLRP6), an adapter (PYCARD/ASC), which recruits effector pro-inflammatory caspases (CASP1 and CASP4). Interacts (via pyrin domain) with PYCARD/ASC (via pyrin domain); interaction takes place following NLRP6 activation and formation of liquid-liquid phase separation (LLPS), initiating nucleation which greatly enhances further addition of soluble PYCARD/ASC molecules to the speck in a prion-like polymerization process. Clustered PYCARD/ASC nucleates the formation of CASP1 (or possibly CASP4) filaments through the interaction of their respective CARD domains, acting as a platform for CASP1 polymerization. CASP1 filament formation increases local enzyme concentration, resulting in trans-autocleavage and activation. Active CASP1 then processes IL1B and IL18 precursors, leading to the release of mature cytokines in the extracellular milieu and inflammatory response. Interacts with DHX15. In terms of processing, polyubiquitinated with 'Lys-63'-linked chains, promoting the interaction with PYCARD/ASC and formation of the NLRP6 inflammasome. Deubiquitination by CYLD decreases the interaction with PYCARD/ASC. In terms of tissue distribution, expressed in peripheral blood leukocytes, predominantly in granulocytes and, at lower levels, in CD4(+) and CD8(+) T-cells. Expressed in colonic myofibroblasts (at protein level).

Its subcellular location is the cytoplasm. The protein localises to the cytosol. It localises to the inflammasome. It is found in the cell membrane. The protein resides in the nucleus membrane. Its function is as follows. Acts as the sensor component of the NLRP6 inflammasome, which mediates inflammasome activation in response to various pathogen-associated signals, leading to maturation and secretion of IL1B and IL18. Inflammasomes are supramolecular complexes that assemble in the cytosol in response to pathogens and other damage-associated signals and play critical roles in innate immunity and inflammation. Acts as a recognition receptor (PRR): recognizes and binds specific pathogens and other damage-associated signals, such as lipoteichoic acid (LTA), a cell-wall component of Gram-positive bacteria, or double stranded RNA (dsRNA). May also recognize and bind lipopolysaccharide (LPS), a major component of the outer membrane of Gram-negative bacteria; however, LPS is probably not a major activator of the NLRP6 inflammasome. Following LTA- or dsRNA-binding, NLRP6 undergoes liquid-liquid phase separation (LLPS), enhancing multivalent interactions, an essential step for the formation of the NLRP6 inflammasome polymeric complex. The NLRP6 inflammasome acts by promoting recruitment of effector pro-inflammatory caspases (CASP1 and/or CASP4) that catalyze maturation and secretion of IL1B and IL18 in the extracellular milieu. The NLRP6 inflammasome plays a central role in the maintenance of epithelial integrity and host defense against microbial infections in the intestine. Required to restrict infection against Gram-positive bacteria by recognizing lipoteichoic acid (LTA), leading to recruitment of CASP4 and CASP1, and subsequent maturation and secretion of IL1B and IL18. Involved in intestinal antiviral innate immunity together with DHX15: recognizes and binds viral dsRNA to restrict infection by enteric viruses through the interferon pathway and GSDMD-dependent release of IL18. Required to prevent infection by the apicomplexan parasite Cryptosporidium in enterocytes by promoting GSDMD-dependent release of IL18. The NLRP6 inflammasome may also regulate the gut microbiota composition by acting as a sensor of microbiota-associated metabolites to form a PYCARD/ASC-dependent inflammasome for downstream IL18 release and secretion of antimicrobial peptides. Essential for gut mucosal self-renewal and proliferation. Regulate mucus secretion in an inflammasome- and autophagy-dependent manner to prevent invasion by enteric bacteria,. During systemic bacterial infections, the NLRP6 inflammasome negatively regulates neutrophil recruitment and neutrophil extracellular traps (NETs) formation. May promote peripheral nerve recovery following injury via an inflammasome-independent mechanism. The sequence is that of NACHT, LRR and PYD domains-containing protein 6 from Homo sapiens (Human).